The sequence spans 344 residues: UDP-glucose 4-epimerase (344 aa).

Residues 15-17 (GYI), 36-40 (DNLSN), 63-64 (DI), F85, and K89 contribute to the NAD(+) site. 129 to 131 (SAT) contacts substrate. Y153 (proton acceptor) is an active-site residue. NAD(+) contacts are provided by K157 and Y181. Substrate-binding positions include 181–183 (YFN), 202–204 (NNL), 220–222 (SIF), R235, and 297–300 (RKGD).

Belongs to the NAD(P)-dependent epimerase/dehydratase family. Homodimer. Requires NAD(+) as cofactor.

The catalysed reaction is UDP-alpha-D-glucose = UDP-alpha-D-galactose. The enzyme catalyses UDP-N-acetyl-alpha-D-glucosamine = UDP-N-acetyl-alpha-D-galactosamine. It functions in the pathway carbohydrate metabolism; galactose metabolism. Functionally, catalyzes two distinct but analogous reactions: the reversible epimerization of UDP-glucose to UDP-galactose and the reversible epimerization of UDP-N-acetylglucosamine to UDP-N-acetylgalactosamine. The reaction with UDP-Gal plays a critical role in the Leloir pathway of galactose catabolism in which galactose is converted to the glycolytic intermediate glucose 6-phosphate. It contributes to the catabolism of dietary galactose and enables the endogenous biosynthesis of both UDP-Gal and UDP-GalNAc when exogenous sources are limited. Both UDP-sugar interconversions are important in the synthesis of glycoproteins and glycolipids. The polypeptide is UDP-glucose 4-epimerase (galE) (Dictyostelium discoideum (Social amoeba)).